Consider the following 260-residue polypeptide: Circadian clock-controlled protein daywake (260 aa).

A signal peptide spans 1-25 (MQLTSASVCLLWMGLLSWVSHRIDA).

Belongs to the TO family.

Component of the circadian clock or downstream effector of clock function. Required for suppressing daytime sleep (siesta) under ambient environmental temperatures. Part of a heat avoidance mechanism that modulates daytime sleep behavior under different environmental temperatures to minimize the risk of heat exposure. Under cooler ambient temperatures, suppresses daytime sleep (siesta) and thus allows for longer periods of daytime activity. The sequence is that of Circadian clock-controlled protein daywake from Drosophila yakuba (Fruit fly).